A 395-amino-acid chain; its full sequence is Multidrug resistance protein MdtL (395 aa).

12 helical membrane-spanning segments follow: residues 4 to 24 (FLLCSFALVLLYPAGIDMYLV), 42 to 62 (IAFSVYLAGMATAMLFAGKIA), 69 to 89 (PVAIVGAIVFMMASLLCSRAS), 93 to 113 (LFLSGRFLQGIGAGGCYVVAF), 131 to 151 (LLNGITCIVPVLAPVVGHLIM), 158 to 178 (SLFYTMSAMGIIVGLLSLFIL), 217 to 237 (VSVILTFVNASPVLLMEVMGF), 247 to 267 (ALTAGVSMVVSFSTPFALGLF), 271 to 291 (TLMLVSQGLFLTAGVTLSLAH), 295 to 315 (VTLFGLTLICAGFSVGFGVAM), 328 to 350 (VASSTLGIAQVCGSSLWIWLAAI), and 355 to 377 (AMNMLIGILIGCSIVSILLIFSV).

This sequence belongs to the major facilitator superfamily. DHA1 family. MdtL (TC 2.A.1.2.22) subfamily.

It localises to the cell inner membrane. The protein is Multidrug resistance protein MdtL of Salmonella dublin (strain CT_02021853).